The sequence spans 421 residues: Proton extrusion protein PxcA (421 aa).

The segment at 124–153 is disordered; it reads PTVHSSNPDDSQLMTSKNNSKPVPDPESDD. A compositionally biased stretch (polar residues) spans 125–144; that stretch reads TVHSSNPDDSQLMTSKNNSK. Helical transmembrane passes span 203–223, 298–318, 345–365, and 381–401; these read FVLL…SFIV, AIKN…LLIS, IIIL…WEVI, and FIFL…KYWI.

This sequence belongs to the CemA family.

The protein localises to the cell inner membrane. Required for H(+) efflux immediately after light irradiation to form a rapid H(+) concentration gradient across the thylakoid membranes. Together with PxcL, contributes to transient H(+) uptake following dark to light transition. In Synechococcus sp. (strain ATCC 27144 / PCC 6301 / SAUG 1402/1) (Anacystis nidulans), this protein is Proton extrusion protein PxcA.